A 321-amino-acid chain; its full sequence is AA9 family lytic polysaccharide monooxygenase A (321 aa).

Residues M1–G21 form the signal peptide. Residue H20 coordinates Cu(2+). C71 and C197 are joined by a disulfide. The N-linked (GlcNAc...) asparagine glycan is linked to N72. Cu(2+) is bound at residue H105. N-linked (GlcNAc...) asparagine glycosylation occurs at N157. Residues H183 and Q192 each coordinate O2. Y194 lines the Cu(2+) pocket. Residues S278–A306 form a disordered region. S293 is lipidated: GPI-anchor amidated serine. The propeptide at S294–A321 is removed in mature form.

It belongs to the polysaccharide monooxygenase AA9 family. The cofactor is Cu(2+).

The protein localises to the cell membrane. The enzyme catalyses [(1-&gt;4)-beta-D-glucosyl]n+m + reduced acceptor + O2 = 4-dehydro-beta-D-glucosyl-[(1-&gt;4)-beta-D-glucosyl]n-1 + [(1-&gt;4)-beta-D-glucosyl]m + acceptor + H2O.. Lytic polysaccharide monooxygenase (LPMO) that depolymerizes crystalline and amorphous polysaccharides via the oxidation of scissile alpha- or beta-(1-4)-glycosidic bonds, yielding C1 or C4 oxidation products. Catalysis by LPMOs requires the reduction of the active-site copper from Cu(II) to Cu(I) by a reducing agent and H(2)O(2) or O(2) as a cosubstrate. Has broad specificity, cleaving at any position along the beta-glucan backbone of xyloglucan, regardless of substitutions. Shows minor activity on glucomannan. In Gloeophyllum trabeum (strain ATCC 11539 / FP-39264 / Madison 617) (Brown rot fungus), this protein is AA9 family lytic polysaccharide monooxygenase A.